Here is a 104-residue protein sequence, read N- to C-terminus: UPF0473 protein LGAS_0424 (104 aa).

Belongs to the UPF0473 family.

The polypeptide is UPF0473 protein LGAS_0424 (Lactobacillus gasseri (strain ATCC 33323 / DSM 20243 / BCRC 14619 / CIP 102991 / JCM 1131 / KCTC 3163 / NCIMB 11718 / NCTC 13722 / AM63)).